A 468-amino-acid polypeptide reads, in one-letter code: Proline--tRNA ligase (468 aa).

Belongs to the class-II aminoacyl-tRNA synthetase family. ProS type 3 subfamily. In terms of assembly, homodimer.

It localises to the cytoplasm. It catalyses the reaction tRNA(Pro) + L-proline + ATP = L-prolyl-tRNA(Pro) + AMP + diphosphate. Functionally, catalyzes the attachment of proline to tRNA(Pro) in a two-step reaction: proline is first activated by ATP to form Pro-AMP and then transferred to the acceptor end of tRNA(Pro). This chain is Proline--tRNA ligase, found in Frankia casuarinae (strain DSM 45818 / CECT 9043 / HFP020203 / CcI3).